A 220-amino-acid polypeptide reads, in one-letter code: MRQKHYLEAAARGLHDSCPGQARYLLWAYTSSHDDKSTFEETCPYCFQLLVLDNSRVRLKPKARLTPKIQKLLNREARNYTLSFKEAKMVKKFKDSKSVLLITCKTCNRTVKHHGKSRSFVSTLKSNPATPTSKLSLKTPERRTANPNHDMSGSKGKSPASVFRTPTSGQSVSTCSSKNTSKTKKHFSQLKMLLSQNESQKIPKVDFRNFLSSLKGGLLK.

A disordered region spans residues 117–181 (SRSFVSTLKS…VSTCSSKNTS (65 aa)). Residues 119–136 (SFVSTLKSNPATPTSKLS) show a composition bias toward polar residues. Position 126 is a phosphoserine (Ser126). Phosphothreonine occurs at positions 130 and 139. The segment covering 171 to 180 (SVSTCSSKNT) has biased composition (low complexity).

The protein belongs to the UPF0711 family.

The sequence is that of UPF0711 protein C18orf21 (C18orf21) from Homo sapiens (Human).